We begin with the raw amino-acid sequence, 1603 residues long: MEAVIKVISSACKTYCGKTSPSKKEIGAMLSLLQKEGLLMSPSDLYSPGSWDPITAALSQRAMILGKSGELKTWGLVLGALKAAREEQVTSEQAKFWLGLGGGRVSPPGPECIEKPATERRIDKGEEVGETTVQRDAKMAPEETATPKTVGTSCYHCGTAIGCNCATASAPPPPYVGSGLYPSLAGVGEQQGQGGDTPPGAEQSRAEPGHAGQAPGPALTDWARVREELASTGPPVVAMPVVIKTEGPAWTPLEPKLITRLADTVRTKGLRSPITMAEVEALMSSPLLPHDVTNLMRVILGPAPYALWMDAWGVQLQTVIAAATRDPRHPANGQGRGERTNLNRLKGLADGMVGNPQGQAALLRPGELVAITASALQAFREVARLAEPAGPWADIMQGPSESFVDFANRLIKAVEGSDLPPSARAPVIIDCFRQKSQPDIQQLIRTAPSTLTTPGEIIKYVLDRQKTAPLTDQGIAAAMSSAIQPLIMAVVNRERDGQTGSGGRARGLCYTCGSPGHYQAQCPKKRKSGNSRERCQLCNGMGHNAKQCRKRDGNQGQRPGKGLSSGPWPGPEPPAVSLAMTMEHKDRPLVRVILTNTGSHPVKQRSVYITALLDSGADITIISEEDWPTDWPVMEAANPQIHGIGGGIPMRKSRDMIELGVINRDGSLERPLLLFPAVAMVRGSILGRDCLQGLGLRLTNLIGRATVLTVALHLAIPLKWKPDHTPVWIDQWPLPEGKLVALTQLVEKELQLGHIEPSLSCWNTPVFVIRKASGSYRLLHDLRAVNAKLVPFGAVQQGAPVLSALPRGWPLMVLDLKDCFFSIPLAEQDREAFAFTLPSVNNQAPARRFQWKVLPQGMTCSPTICQLVVGQVLEPLRLKHPSLCMLHYMDDLLLAASSHDGLEAAGEEVISTLERAGFTISPDKVQREPGVQYLGYKLGSTYVAPVGLVAEPRIATLWDVQKLVGSLQWLRPALGIPPRLMGPFYEQLRGSDPNEAREWNLDMKMAWREIVRLSTTAALERWDPALPLEGAVARCEQGAIGVLGQGLSTHPRPCLWLFSTQPTKAFTAWLEVLTLLITKLRASAVRTFGKEVDILLLPACFREDLPLPEGILLALKGFAGKIRSSDTPSIFDIARPLHVSLKVRVTDHPVPGPTVFTDASSSTHKGVVVWREGPRWEIKEIADLGASVQQLEARAVAMALLLWPTTPTNVVTDSAFVAKMLLKMGQEGVPSTAAAFILEDALSQRSAMAAVLHVRSHSEVPGFFTEGNDVADSQATFQAYPLREAKDLHTALHIGPRALSKACNISMQQAREVVQTCPHCNSAPALEAGVNPRGLGPLQIWQTDFTLEPRMAPRSWLAVTVDTASSAIVVTQHGRVTSVAVQHHWATAIAVLGRPKAIKTDNGSCFTSKSTREWLARWGIAHTTGIPGNSQGQAMVERANRLLKDRIRVLAEGDGFMKRIPTSKQGELLAKAMYALNHFERGENTKTPIQKHWRPTVLTEGPPVKIRIETGEWEKGWNVLVWGRGYAAVKNRDTDKVIWVPSRKVKPDITQKDEVTKKDEASPLFAGISDWIPWEDEQEGLQGETASNKQERPGEDTLAANES.

A compositionally biased stretch (basic and acidic residues) spans 128–141; that stretch reads VGETTVQRDAKMAP. Residues 128-150 form a disordered region; sequence VGETTVQRDAKMAPEETATPKTV. Positions 172 to 175 match the PPXY motif motif; sequence PPPY. The short motif at 180 to 184 is the LYPX(n)L motif element; sequence LYPSL. Residues 181 to 217 form a disordered region; the sequence is YPSLAGVGEQQGQGGDTPPGAEQSRAEPGHAGQAPGP. 3 involved in capsid protein dimerization regions span residues 217 to 259, 290 to 298, and 351 to 362; these read PALT…KLIT, HDVTNLMRV, and GMVGNPQGQAAL. A Nuclear export signal motif is present at residues 219–229; it reads LTDWARVREEL. 2 consecutive CCHC-type zinc fingers follow at residues 507–524 and 533–550; these read GLCY…QCPK and ERCQ…QCRK. A Nuclear/nucleolar localization signal motif is present at residues 524–527; it reads KKRK. The tract at residues 543–575 is disordered; the sequence is HNAKQCRKRDGNQGQRPGKGLSSGPWPGPEPPA. Positions 609-690 constitute a Peptidase A2 domain; it reads ITALLDSGAD…VRGSILGRDC (82 aa). Asp-614 acts as the For protease activity; shared with dimeric partner in catalysis. Positions 750–938 constitute a Reverse transcriptase domain; the sequence is LQLGHIEPSL…PGVQYLGYKL (189 aa). Residues Asp-815, Asp-890, Asp-891, Asp-1158, Glu-1192, Asp-1213, and Asp-1272 each contribute to the Mg(2+) site. The 132-residue stretch at 1149–1280 folds into the RNase H type-1 domain; it reads PVPGPTVFTD…ADSQATFQAY (132 aa). Residues 1280-1321 form an Integrase-type zinc finger; the sequence is YPLREAKDLHTALHIGPRALSKACNISMQQAREVVQTCPHCN. Residues His-1289, His-1293, Cys-1317, and Cys-1320 each coordinate Zn(2+). In terms of domain architecture, Integrase catalytic spans 1333 to 1496; that stretch reads RGLGPLQIWQ…TPIQKHWRPT (164 aa). Residues Asp-1344, Asp-1401, and Glu-1437 each contribute to the Mg(2+) site. A DNA-binding region (integrase-type) is located at residues 1502–1550; it reads PPVKIRIETGEWEKGWNVLVWGRGYAAVKNRDTDKVIWVPSRKVKPDIT. Residues 1548 to 1567 form an involved in homooctamerization region; the sequence is DITQKDEVTKKDEASPLFAG. A disordered region spans residues 1569–1603; it reads SDWIPWEDEQEGLQGETASNKQERPGEDTLAANES.

As to quaternary structure, active as a homodimer. Homodimer. Homomultimer. Homohexamer. In terms of assembly, homodimer; further associates as a homooctamer. As to quaternary structure, heterodimer of alpha and beta subunits. Three forms of RT exist: alpha-alpha (alpha-Pol), beta-beta (beta-Pol), and alpha-beta, with the major form being the heterodimer. Both the polymerase and RNase H active sites are located in the alpha subunit of heterodimeric RT alpha-beta. It depends on Mg(2+) as a cofactor. Mn(2+) is required as a cofactor. In terms of processing, specific enzymatic cleavages in vivo yield mature proteins. Post-translationally, capsid protein p27: The cleavage at the C-terminus is slowly trimmed by the viral protease, sometimes being cut internally thereby generating the short version of the capsid protein and a capsid protein C-terminally extended by 3 amino acids in a ratio of 2:1.

The protein resides in the virion. The enzyme catalyses DNA(n) + a 2'-deoxyribonucleoside 5'-triphosphate = DNA(n+1) + diphosphate. It carries out the reaction Endonucleolytic cleavage to 5'-phosphomonoester.. In terms of biological role, capsid protein p27: Self-associates to form the irregular polyhedron core composed of hexamers and pentamers, that encapsulates the genomic RNA-nucleocapsid complex. Assembles as a tube in vitro. Binds to inositol hexakisphosphate (IP6), which allows the assembly of the polyhedral capsid. Functionally, plays a role in the oligomerization of the Gag polyprotein and in the stabilization of the immature particle. Essential layering element during tube assembly. Allows the cooperative binging of Gag to the host plasma membrane. Its function is as follows. Binds strongly to viral nucleic acids and promotes their packaging. Plays a role in the maturation-stabilization of the viral dimeric RNA via highly structured zinc-binding motifs. The aspartyl protease mediates proteolytic cleavages of Gag and Gag-Pol polyproteins during or shortly after the release of the virion from the plasma membrane. Cleavages take place as an ordered, step-wise cascade to yield mature proteins. This process is called maturation. Displays maximal activity during the budding process just prior to particle release from the cell. In terms of biological role, catalyzes viral DNA integration into the host chromosome, by performing a series of DNA cutting and joining reactions. This recombination event is an essential step in the viral replication cycle. Has a strong preference for using the 3'-OH at the viral DNA end as a nucleophile. The polypeptide is Gag-Pol polyprotein (gag-pol) (Gallus gallus (Chicken)).